The primary structure comprises 235 residues: Transcriptional regulatory protein WalR (235 aa).

The Response regulatory domain maps to 4-117; the sequence is KILVVDDEKP…ELLARVKANL (114 aa). Position 53 is a 4-aspartylphosphate (Asp53). Positions 132-231 form a DNA-binding region, ompR/PhoB-type; the sequence is SNEIHIGSLV…RRGVGYYLRN (100 aa).

As to quaternary structure, homodimer. Phosphorylated by WalK.

The protein resides in the cytoplasm. Member of the two-component regulatory system WalK/WalR involved in the regulation of the ftsAZ operon, the yocH, ykvT, cwlO, lytE, ydjM, yjeA, yoeB genes and the tagAB and tagDEF operons. Binds to the ftsAZ P1 promoter sequence in vitro. WalR has been shown to directly bind to the regulatory regions of yocH, ykvT, tagAB/tagDEF. Activates cwlO, lytE and ydjM and represses yoeB and yjeA. In Bacillus subtilis (strain 168), this protein is Transcriptional regulatory protein WalR.